A 240-amino-acid chain; its full sequence is ATP-dependent dethiobiotin synthetase BioD 1 (240 aa).

13–18 (DVGKTV) serves as a coordination point for ATP. Residue Thr17 participates in Mg(2+) binding. Residue Lys38 is part of the active site. Ser42 lines the substrate pocket. Residues Asp55, 116–119 (EGAG), 176–177 (NE), 205–207 (PYL), and Glu212 contribute to the ATP site. Asp55 and Glu116 together coordinate Mg(2+).

It belongs to the dethiobiotin synthetase family. As to quaternary structure, homodimer. The cofactor is Mg(2+).

Its subcellular location is the cytoplasm. It carries out the reaction (7R,8S)-7,8-diammoniononanoate + CO2 + ATP = (4R,5S)-dethiobiotin + ADP + phosphate + 3 H(+). The protein operates within cofactor biosynthesis; biotin biosynthesis; biotin from 7,8-diaminononanoate: step 1/2. Functionally, catalyzes a mechanistically unusual reaction, the ATP-dependent insertion of CO2 between the N7 and N8 nitrogen atoms of 7,8-diaminopelargonic acid (DAPA, also called 7,8-diammoniononanoate) to form a ureido ring. The sequence is that of ATP-dependent dethiobiotin synthetase BioD 1 from Yersinia pestis.